A 453-amino-acid chain; its full sequence is Probable exopolygalacturonase B (453 aa).

An N-terminal signal peptide occupies residues 1-16 (MKFFALAALFASTVNS). 2 N-linked (GlcNAc...) asparagine glycosylation sites follow: Asn-185 and Asn-225. Catalysis depends on Asp-255, which acts as the Proton donor. A disulfide bridge links Cys-257 with Cys-274. 2 N-linked (GlcNAc...) asparagine glycosylation sites follow: Asn-263 and Asn-275. Residue His-278 is part of the active site. 2 PbH1 repeats span residues 295–316 (IENV…RLKA) and 327–348 (INNV…VLDQ). N-linked (GlcNAc...) asparagine glycosylation is found at Asn-302, Asn-329, Asn-354, and Asn-366. Residues 362–405 (PSRVNFTNIVFEDIYGTSSGKRGKVVADLTCSPNAVCSGIRLKN) form a PbH1 3 repeat. Residues Cys-392 and Cys-398 are joined by a disulfide bond. An N-linked (GlcNAc...) asparagine glycan is attached at Asn-436.

Belongs to the glycosyl hydrolase 28 family.

The protein localises to the secreted. It carries out the reaction [(1-&gt;4)-alpha-D-galacturonosyl](n) + H2O = alpha-D-galacturonate + [(1-&gt;4)-alpha-D-galacturonosyl](n-1). Its function is as follows. Specific in hydrolyzing the terminal glycosidic bond of polygalacturonic acid and oligogalacturonates. The chain is Probable exopolygalacturonase B (pgxB) from Aspergillus fumigatus (strain CBS 144.89 / FGSC A1163 / CEA10) (Neosartorya fumigata).